Consider the following 494-residue polypeptide: NADH-ubiquinone oxidoreductase chain 4 (494 aa).

14 helical membrane passes run 6 to 26 (IMIY…LLIY), 41 to 61 (TIGL…FILF), 87 to 107 (IDGI…ISLV), 118 to 138 (VLSF…VFLV), 141 to 161 (ILLF…LIGL), 172 to 192 (FYLF…IITM), 207 to 227 (ANFS…SFAV), 246 to 266 (PLAG…YGIF), 280 to 300 (YTYI…FSTL), 302 to 322 (TIAI…VYLL), 336 to 356 (IALG…VGGI), 375 to 395 (LMPI…GSPL), 415 to 435 (VLGV…IFMF), and 460 to 480 (FILL…PAVI).

This sequence belongs to the complex I subunit 4 family.

The protein resides in the mitochondrion membrane. It catalyses the reaction a ubiquinone + NADH + 5 H(+)(in) = a ubiquinol + NAD(+) + 4 H(+)(out). Functionally, core subunit of the mitochondrial membrane respiratory chain NADH dehydrogenase (Complex I) that is believed to belong to the minimal assembly required for catalysis. Complex I functions in the transfer of electrons from NADH to the respiratory chain. The immediate electron acceptor for the enzyme is believed to be ubiquinone. This Trichophyton rubrum (Athlete's foot fungus) protein is NADH-ubiquinone oxidoreductase chain 4 (ND4).